The following is a 914-amino-acid chain: Probable dipeptidyl-aminopeptidase B (914 aa).

The tract at residues 1–82 (MGAEKRINDE…GLPPPSGAQR (82 aa)) is disordered. At 1–88 (MGAEKRINDE…GAQRTPKKVS (88 aa)) the chain is on the cytoplasmic side. Positions 26–38 (DSTSTASISLALI) are enriched in low complexity. Residues 89–109 (IIFWLVAALCVGGWLVAFFVF) traverse the membrane as a helical; Signal-anchor for type II membrane protein segment. The Vacuolar segment spans residues 110–914 (MGSPKKDSDK…RSLLKRMSNA (805 aa)). 4 N-linked (GlcNAc...) asparagine glycosylation sites follow: N128, N295, N347, and N617. S751 functions as the Charge relay system in the catalytic mechanism. Residue N810 is glycosylated (N-linked (GlcNAc...) asparagine). Residues D828 and H861 each act as charge relay system in the active site. N897 carries N-linked (GlcNAc...) asparagine glycosylation.

This sequence belongs to the peptidase S9B family.

The protein localises to the vacuole membrane. The enzyme catalyses Release of an N-terminal dipeptide, Xaa-Yaa-|-Zaa-, from a polypeptide, preferentially when Yaa is Pro, provided Zaa is neither Pro nor hydroxyproline.. Its function is as follows. Type IV dipeptidyl-peptidase which removes N-terminal dipeptides sequentially from polypeptides having unsubstituted N-termini provided that the penultimate residue is proline. The sequence is that of Probable dipeptidyl-aminopeptidase B (DAPB) from Uncinocarpus reesii (strain UAMH 1704).